A 272-amino-acid chain; its full sequence is MKKIARITTQKKHKNRYNIFLQTPDGGDAYGFSVDEAILIEYRLSKGMELEDEMISILEQKDTLHKAYTLTIHFLSYRMRSEKEVSDYLQKKEVDEEHIAEIIKRLKKEKWVDDQQFAEMFVRSRINSSSKGPKMIQQELFEKGVDGSKITSALEQYPVEEQKQKVEKLISKKLQSKSKDSHQKRIDQIKQNLMQKGFDSGVISMVIQQMDTTEDTDREWEVLQLQGEKLLYKYQKKHSGFALKQKVMEGLYRKGFSFDMINQFIDQSLQDE.

This sequence belongs to the RecX family.

Its subcellular location is the cytoplasm. In terms of biological role, modulates RecA activity. The polypeptide is Regulatory protein RecX (Oceanobacillus iheyensis (strain DSM 14371 / CIP 107618 / JCM 11309 / KCTC 3954 / HTE831)).